The chain runs to 292 residues: Ribosomal protein L11 methyltransferase (292 aa).

Residues Thr-136, Gly-159, Asp-181, and Asn-228 each coordinate S-adenosyl-L-methionine.

Belongs to the methyltransferase superfamily. PrmA family.

The protein localises to the cytoplasm. It catalyses the reaction L-lysyl-[protein] + 3 S-adenosyl-L-methionine = N(6),N(6),N(6)-trimethyl-L-lysyl-[protein] + 3 S-adenosyl-L-homocysteine + 3 H(+). Its function is as follows. Methylates ribosomal protein L11. This Rhizobium etli (strain ATCC 51251 / DSM 11541 / JCM 21823 / NBRC 15573 / CFN 42) protein is Ribosomal protein L11 methyltransferase.